Reading from the N-terminus, the 279-residue chain is Shikimate dehydrogenase (NADP(+)) (279 aa).

Shikimate is bound by residues 21 to 23 (SRS) and Thr-68. Lys-72 acts as the Proton acceptor in catalysis. Residue Asp-83 coordinates NADP(+). Positions 92 and 107 each coordinate shikimate. Residues 132–136 (GAGGA), 156–161 (NRTVER), and Leu-221 each bind NADP(+). Shikimate is bound at residue Tyr-223. Gly-244 serves as a coordination point for NADP(+).

The protein belongs to the shikimate dehydrogenase family. As to quaternary structure, homodimer.

It carries out the reaction shikimate + NADP(+) = 3-dehydroshikimate + NADPH + H(+). Its pathway is metabolic intermediate biosynthesis; chorismate biosynthesis; chorismate from D-erythrose 4-phosphate and phosphoenolpyruvate: step 4/7. Its function is as follows. Involved in the biosynthesis of the chorismate, which leads to the biosynthesis of aromatic amino acids. Catalyzes the reversible NADPH linked reduction of 3-dehydroshikimate (DHSA) to yield shikimate (SA). This Nitrobacter winogradskyi (strain ATCC 25391 / DSM 10237 / CIP 104748 / NCIMB 11846 / Nb-255) protein is Shikimate dehydrogenase (NADP(+)).